We begin with the raw amino-acid sequence, 367 residues long: Protein-glutamate methylesterase/protein-glutamine glutaminase 1 (367 aa).

Positions 9–126 (KVLCVDDSAL…RDGMLDYSEK (118 aa)) constitute a Response regulatory domain. At Asp-60 the chain carries 4-aspartylphosphate. A CheB-type methylesterase domain is found at 168–360 (LVSTEKLIIV…RRIMARLASM (193 aa)). Residues Ser-180, His-206, and Asp-302 contribute to the active site.

Belongs to the CheB family. In terms of processing, phosphorylated by CheA. Phosphorylation of the N-terminal regulatory domain activates the methylesterase activity.

It is found in the cytoplasm. It catalyses the reaction [protein]-L-glutamate 5-O-methyl ester + H2O = L-glutamyl-[protein] + methanol + H(+). The catalysed reaction is L-glutaminyl-[protein] + H2O = L-glutamyl-[protein] + NH4(+). Involved in chemotaxis. Part of a chemotaxis signal transduction system that modulates chemotaxis in response to various stimuli. Catalyzes the demethylation of specific methylglutamate residues introduced into the chemoreceptors (methyl-accepting chemotaxis proteins or MCP) by CheR. Also mediates the irreversible deamidation of specific glutamine residues to glutamic acid. The chain is Protein-glutamate methylesterase/protein-glutamine glutaminase 1 from Burkholderia pseudomallei (strain K96243).